Consider the following 418-residue polypeptide: MPMLNAQQFLNQFSLEAPLDESLYPIIRDICQEVKVHGDKALKMYNLTFDHTKTDHLEISHEQIKAAFDTLDEKTKQALQQSYERIKAYQESIKQMNQQLEESVECYEIYHPLESVGIYVPGGKASYPSTVLMTATLAQVAGVENIVVVTPPQPNGVSQEVLAACYITQVNQVFQVGGAQSIAALTYGTETIPKVDKIVGPGNQFVAYAKKYLFGQVGIDQIAGPTEIALIIDDTADLDAIVYDVFAQAEHDELARTYVISEDAQVLKDLESRIAKALPNVDRYDIVSKSIANQHYLIHASNFDEACHVMNTIAPEHASIQTVNPQPYIEKVKYVGALFIGHYSPEVIGDYVAGPSHVLPTNRTARFTNGLSVNDFLTRNTVIHLSKDTFDQIADSAQHIAHVEALYNHQQSILIRQS.

NAD(+)-binding residues include Tyr119, Gln180, and Asn203. The substrate site is built by Thr226, Gln248, and His251. Zn(2+) contacts are provided by Gln248 and His251. Catalysis depends on proton acceptor residues Glu316 and His317. 4 residues coordinate substrate: His317, Asp350, Glu404, and His409. Asp350 lines the Zn(2+) pocket. Residue His409 participates in Zn(2+) binding.

This sequence belongs to the histidinol dehydrogenase family. Zn(2+) serves as cofactor.

The enzyme catalyses L-histidinol + 2 NAD(+) + H2O = L-histidine + 2 NADH + 3 H(+). Its pathway is amino-acid biosynthesis; L-histidine biosynthesis; L-histidine from 5-phospho-alpha-D-ribose 1-diphosphate: step 9/9. Catalyzes the sequential NAD-dependent oxidations of L-histidinol to L-histidinaldehyde and then to L-histidine. The protein is Histidinol dehydrogenase of Staphylococcus aureus (strain MRSA252).